A 487-amino-acid chain; its full sequence is GTPase Der (487 aa).

2 consecutive EngA-type G domains span residues 3–166 (PVIA…PRDA) and 193–366 (IKIA…QSAV). GTP is bound by residues 9-16 (GRPNVGKS), 56-60 (DTGGI), 118-121 (NKID), 199-206 (GRPNVGKS), 246-250 (DTAGV), and 311-314 (NKWD). The KH-like domain occupies 367 to 451 (TRWPTSRLTQ…PIRIEYKGGE (85 aa)). Basic and acidic residues predominate over residues 448 to 461 (KGGENPYEGKKNTL). The segment at 448-487 (KGGENPYEGKKNTLTDRQVNKKRRLMSHHKKAEKKRRDKR) is disordered. Residues 467–487 (NKKRRLMSHHKKAEKKRRDKR) are compositionally biased toward basic residues.

Belongs to the TRAFAC class TrmE-Era-EngA-EngB-Septin-like GTPase superfamily. EngA (Der) GTPase family. In terms of assembly, associates with the 50S ribosomal subunit.

Functionally, GTPase that plays an essential role in the late steps of ribosome biogenesis. The sequence is that of GTPase Der from Pseudomonas putida (strain ATCC 47054 / DSM 6125 / CFBP 8728 / NCIMB 11950 / KT2440).